Consider the following 482-residue polypeptide: UDP-N-acetylmuramate--L-alanine ligase (482 aa).

129 to 135 (GTHGKTT) lines the ATP pocket.

This sequence belongs to the MurCDEF family.

Its subcellular location is the cytoplasm. The enzyme catalyses UDP-N-acetyl-alpha-D-muramate + L-alanine + ATP = UDP-N-acetyl-alpha-D-muramoyl-L-alanine + ADP + phosphate + H(+). It functions in the pathway cell wall biogenesis; peptidoglycan biosynthesis. Functionally, cell wall formation. The chain is UDP-N-acetylmuramate--L-alanine ligase from Acinetobacter baumannii (strain AB307-0294).